The following is a 427-amino-acid chain: Glutamate-1-semialdehyde 2,1-aminomutase (427 aa).

Lysine 265 is subject to N6-(pyridoxal phosphate)lysine.

The protein belongs to the class-III pyridoxal-phosphate-dependent aminotransferase family. HemL subfamily. As to quaternary structure, homodimer. Requires pyridoxal 5'-phosphate as cofactor.

The protein localises to the cytoplasm. The enzyme catalyses (S)-4-amino-5-oxopentanoate = 5-aminolevulinate. The protein operates within porphyrin-containing compound metabolism; protoporphyrin-IX biosynthesis; 5-aminolevulinate from L-glutamyl-tRNA(Glu): step 2/2. This chain is Glutamate-1-semialdehyde 2,1-aminomutase, found in Neisseria meningitidis serogroup B (strain ATCC BAA-335 / MC58).